The sequence spans 329 residues: 2,3,4,5-tetrahydropyridine-2,6-dicarboxylate N-succinyltransferase (329 aa).

Residues Asp-177 and Glu-194 each contribute to the Mg(2+) site. The Acyl-anhydride intermediate role is filled by Glu-210. Succinyl-CoA contacts are provided by residues Arg-212, Gly-227, Ser-230, Ala-253, 268–269, Gly-276, Lys-288, and 301–304; these read EA and RRNS.

Belongs to the type 2 tetrahydrodipicolinate N-succinyltransferase family. In terms of assembly, homotrimer.

It localises to the cytoplasm. The catalysed reaction is (S)-2,3,4,5-tetrahydrodipicolinate + succinyl-CoA + H2O = (S)-2-succinylamino-6-oxoheptanedioate + CoA. It participates in amino-acid biosynthesis; L-lysine biosynthesis via DAP pathway; LL-2,6-diaminopimelate from (S)-tetrahydrodipicolinate (succinylase route): step 1/3. In terms of biological role, catalyzes the conversion of the cyclic tetrahydrodipicolinate (THDP) into the acyclic N-succinyl-L-2-amino-6-oxopimelate using succinyl-CoA. This Streptomyces coelicolor (strain ATCC BAA-471 / A3(2) / M145) protein is 2,3,4,5-tetrahydropyridine-2,6-dicarboxylate N-succinyltransferase.